The primary structure comprises 560 residues: NAD-dependent malic enzyme (560 aa).

Tyrosine 100 acts as the Proton donor in catalysis. Arginine 153 contacts NAD(+). Catalysis depends on lysine 171, which acts as the Proton acceptor. Glutamate 242, aspartate 243, and aspartate 266 together coordinate a divalent metal cation. NAD(+)-binding residues include aspartate 266 and asparagine 413.

The protein belongs to the malic enzymes family. As to quaternary structure, homotetramer. Mg(2+) is required as a cofactor. It depends on Mn(2+) as a cofactor.

The catalysed reaction is (S)-malate + NAD(+) = pyruvate + CO2 + NADH. It catalyses the reaction oxaloacetate + H(+) = pyruvate + CO2. The chain is NAD-dependent malic enzyme from Psychrobacter cryohalolentis (strain ATCC BAA-1226 / DSM 17306 / VKM B-2378 / K5).